The chain runs to 228 residues: NAD(P)H-hydrate epimerase (228 aa).

The YjeF N-terminal domain occupies 9–209; that stretch reads VRAVERLAHR…LLGLTPAFLA (201 aa). Residue 53-57 coordinates (6S)-NADPHX; the sequence is NNGGD. The K(+) site is built by Asn-54 and Asp-115. Residues 119-125 and Asp-148 contribute to the (6S)-NADPHX site; that span reads GIGLARP. Ser-151 contacts K(+).

Belongs to the NnrE/AIBP family. Requires K(+) as cofactor.

It carries out the reaction (6R)-NADHX = (6S)-NADHX. The catalysed reaction is (6R)-NADPHX = (6S)-NADPHX. Its function is as follows. Catalyzes the epimerization of the S- and R-forms of NAD(P)HX, a damaged form of NAD(P)H that is a result of enzymatic or heat-dependent hydration. This is a prerequisite for the S-specific NAD(P)H-hydrate dehydratase to allow the repair of both epimers of NAD(P)HX. The polypeptide is NAD(P)H-hydrate epimerase (Bordetella bronchiseptica (strain ATCC BAA-588 / NCTC 13252 / RB50) (Alcaligenes bronchisepticus)).